We begin with the raw amino-acid sequence, 193 residues long: Recombination protein RecR (193 aa).

The C4-type zinc-finger motif lies at 61–76 (CSSCNALSESEVCEIC). Residues 84-170 (SQLCMVLHPR…TFTKIAQGVP (87 aa)) form the Toprim domain.

It belongs to the RecR family.

Functionally, may play a role in DNA repair. It seems to be involved in an RecBC-independent recombinational process of DNA repair. It may act with RecF and RecO. The sequence is that of Recombination protein RecR from Helicobacter pylori (strain G27).